A 140-amino-acid chain; its full sequence is Nuclear receptor 2C2-associated protein (140 aa).

The protein belongs to the NR2C2AP family. In terms of assembly, interacts with NR2C2/TR4.

It localises to the nucleus. May act as a repressor of NR2C2-mediated transactivation by suppressing the binding between NR2C2/TR4 and the TR4-response element in target genes. This is Nuclear receptor 2C2-associated protein (Nr2c2ap) from Mus musculus (Mouse).